The sequence spans 348 residues: D-amino-acid oxidase (348 aa).

FAD is bound by residues alanine 15, isoleucine 18, lysine 40, serine 52, glycine 56, and asparagine 58. Residues tyrosine 232 and arginine 295 each contribute to the (R)-lactate site. The anthranilate site is built by tyrosine 232 and arginine 295. Residues arginine 295, serine 323, glycine 326, tyrosine 327, and glutamine 328 each coordinate FAD.

Belongs to the DAMOX/DASOX family. Requires FAD as cofactor.

The protein resides in the peroxisome. It catalyses the reaction a D-alpha-amino acid + O2 + H2O = a 2-oxocarboxylate + H2O2 + NH4(+). The catalysed reaction is D-serine + O2 + H2O = 3-hydroxypyruvate + H2O2 + NH4(+). The enzyme catalyses D-alanine + O2 + H2O = pyruvate + H2O2 + NH4(+). It carries out the reaction D-arginine + O2 + H2O = 5-guanidino-2-oxopentanoate + H2O2 + NH4(+). In terms of biological role, catalyzes the oxidative deamination of D-amino acids with broad substrate specificity. Enables the organism to utilize D-amino acids as a source of nutrients. This Schizosaccharomyces pombe (strain 972 / ATCC 24843) (Fission yeast) protein is D-amino-acid oxidase.